The following is a 40-amino-acid chain: Ice-structuring protein GS-8 (40 aa).

A Blocked amino end (Met) modification is found at Met-1.

Belongs to the type-I AFP family.

Functionally, antifreeze proteins lower the blood freezing point. The sequence is that of Ice-structuring protein GS-8 from Myoxocephalus aenaeus (Grubby sculpin).